Reading from the N-terminus, the 146-residue chain is Interleukin-13 (146 aa).

An N-terminal signal peptide occupies residues 1–24 (MHPLLNPLLLALGLMALLLTTVIA). N52, N63, N71, and N86 each carry an N-linked (GlcNAc...) asparagine glycan. 2 disulfide bridges follow: C62/C90 and C78/C104.

The protein belongs to the IL-4/IL-13 family. Interacts with IL13RA2.

It localises to the secreted. Cytokine that plays important roles in allergic inflammation and immune response to parasite infection. Synergizes with IL2 in regulating interferon-gamma synthesis. Stimulates B-cell proliferation, and activation of eosinophils, basophils, and mast cells. Plays an important role in controlling IL33 activity by modulating the production of transmembrane and soluble forms of interleukin-1 receptor-like 1/IL1RL1. Displays the capacity to antagonize Th1-driven proinflammatory immune response and downregulates synthesis of many proinflammatory cytokines including IL1, IL6, IL10, IL12 and TNF-alpha through a mechanism that partially involves suppression of NF-kappa-B. Also functions on nonhematopoietic cells, including endothelial cells where it induces vascular cell adhesion protein 1/VCAM1, which is important in the recruitment of eosinophils. Exerts its biological effects through its receptors which comprises the IL4R chain and the IL13RA1 chain, to activate JAK1 and TYK2, leading to the activation of STAT6. Aside from IL13RA1, another receptor IL13RA2 acts as a high affinity decoy for IL13 and mediates internalization and depletion of extracellular IL13. The sequence is that of Interleukin-13 (IL13) from Homo sapiens (Human).